The sequence spans 112 residues: Large ribosomal subunit protein uL22 (112 aa).

Belongs to the universal ribosomal protein uL22 family. As to quaternary structure, part of the 50S ribosomal subunit.

In terms of biological role, this protein binds specifically to 23S rRNA; its binding is stimulated by other ribosomal proteins, e.g. L4, L17, and L20. It is important during the early stages of 50S assembly. It makes multiple contacts with different domains of the 23S rRNA in the assembled 50S subunit and ribosome. The globular domain of the protein is located near the polypeptide exit tunnel on the outside of the subunit, while an extended beta-hairpin is found that lines the wall of the exit tunnel in the center of the 70S ribosome. This chain is Large ribosomal subunit protein uL22, found in Sorangium cellulosum (strain So ce56) (Polyangium cellulosum (strain So ce56)).